Reading from the N-terminus, the 205-residue chain is Ribosomal RNA small subunit methyltransferase G (205 aa).

Residues G71, F76, 120-121 (IE), and R134 each bind S-adenosyl-L-methionine.

It belongs to the methyltransferase superfamily. RNA methyltransferase RsmG family.

It localises to the cytoplasm. The catalysed reaction is guanosine(527) in 16S rRNA + S-adenosyl-L-methionine = N(7)-methylguanosine(527) in 16S rRNA + S-adenosyl-L-homocysteine. In terms of biological role, specifically methylates the N7 position of guanine in position 527 of 16S rRNA. This Paramagnetospirillum magneticum (strain ATCC 700264 / AMB-1) (Magnetospirillum magneticum) protein is Ribosomal RNA small subunit methyltransferase G.